The sequence spans 154 residues: Ribonuclease H (154 aa).

The 142-residue stretch at 1-142 folds into the RNase H type-1 domain; that stretch reads MRKQIEIFTD…CDELAKQGAE (142 aa). Mg(2+)-binding residues include aspartate 10, glutamate 48, aspartate 70, and aspartate 134.

This sequence belongs to the RNase H family. Monomer. Mg(2+) serves as cofactor.

The protein resides in the cytoplasm. It catalyses the reaction Endonucleolytic cleavage to 5'-phosphomonoester.. Endonuclease that specifically degrades the RNA of RNA-DNA hybrids. The protein is Ribonuclease H of Actinobacillus succinogenes (strain ATCC 55618 / DSM 22257 / CCUG 43843 / 130Z).